The following is a 494-amino-acid chain: Probable cytosol aminopeptidase (494 aa).

The Mn(2+) site is built by Lys-260 and Asp-265. Lys-272 is a catalytic residue. Residues Asp-283, Asp-342, and Glu-344 each coordinate Mn(2+). Residue Arg-346 is part of the active site.

The protein belongs to the peptidase M17 family. Mn(2+) serves as cofactor.

It localises to the cytoplasm. The catalysed reaction is Release of an N-terminal amino acid, Xaa-|-Yaa-, in which Xaa is preferably Leu, but may be other amino acids including Pro although not Arg or Lys, and Yaa may be Pro. Amino acid amides and methyl esters are also readily hydrolyzed, but rates on arylamides are exceedingly low.. It carries out the reaction Release of an N-terminal amino acid, preferentially leucine, but not glutamic or aspartic acids.. In terms of biological role, presumably involved in the processing and regular turnover of intracellular proteins. Catalyzes the removal of unsubstituted N-terminal amino acids from various peptides. In Bacillus cereus (strain AH187), this protein is Probable cytosol aminopeptidase.